The chain runs to 233 residues: 7-cyano-7-deazaguanine synthase (233 aa).

17–27 provides a ligand contact to ATP; that stretch reads LSGGLDSMVCA. Zn(2+)-binding residues include C196, C206, C209, and C212.

The protein belongs to the QueC family. Zn(2+) serves as cofactor.

The enzyme catalyses 7-carboxy-7-deazaguanine + NH4(+) + ATP = 7-cyano-7-deazaguanine + ADP + phosphate + H2O + H(+). It functions in the pathway purine metabolism; 7-cyano-7-deazaguanine biosynthesis. Catalyzes the ATP-dependent conversion of 7-carboxy-7-deazaguanine (CDG) to 7-cyano-7-deazaguanine (preQ(0)). This Novosphingobium aromaticivorans (strain ATCC 700278 / DSM 12444 / CCUG 56034 / CIP 105152 / NBRC 16084 / F199) protein is 7-cyano-7-deazaguanine synthase.